A 208-amino-acid polypeptide reads, in one-letter code: Small ribosomal subunit protein uS4 (208 aa).

The interval Ser-31 to Ser-51 is disordered. The S4 RNA-binding domain occupies Arg-98 to Ala-160.

The protein belongs to the universal ribosomal protein uS4 family. Part of the 30S ribosomal subunit. Contacts protein S5. The interaction surface between S4 and S5 is involved in control of translational fidelity.

One of the primary rRNA binding proteins, it binds directly to 16S rRNA where it nucleates assembly of the body of the 30S subunit. Its function is as follows. With S5 and S12 plays an important role in translational accuracy. The sequence is that of Small ribosomal subunit protein uS4 from Helicobacter pylori (strain ATCC 700392 / 26695) (Campylobacter pylori).